Reading from the N-terminus, the 275-residue chain is Pyridoxal phosphate homeostasis protein (275 aa).

Ser6 carries the phosphoserine modification. Lys47 carries the N6-(pyridoxal phosphate)lysine modification. Tyr69 is subject to Phosphotyrosine. Lys125 carries the post-translational modification N6-succinyllysine. 2 positions are modified to phosphoserine: Ser226 and Ser244.

This sequence belongs to the pyridoxal phosphate-binding protein YggS/PROSC family.

In terms of biological role, pyridoxal 5'-phosphate (PLP)-binding protein, which may be involved in intracellular homeostatic regulation of pyridoxal 5'-phosphate (PLP), the active form of vitamin B6. This Pongo abelii (Sumatran orangutan) protein is Pyridoxal phosphate homeostasis protein.